Here is a 342-residue protein sequence, read N- to C-terminus: Aldo-keto reductase pigE (342 aa).

The first 27 residues, 1-27 (MGSISPKTRFPIVLGAGLIGSPGLFEG), serve as a signal peptide directing secretion. Aspartate 52 contacts NADP(+). Tyrosine 57 acts as the Proton donor in catalysis. The NADP(+) site is built by glutamine 182 and arginine 236. Asparagine 271 carries N-linked (GlcNAc...) asparagine glycosylation.

Belongs to the aldo/keto reductase family. Aldo/keto reductase 2 subfamily.

It participates in secondary metabolite biosynthesis. In terms of biological role, aldo-keto reductase; part of the gene cluster that mediates the biosynthesis of azaphilone pigments (MonAzPs), a complex mixture of compounds with a common azaphilone skeleton very widely used as food colorants. Within the pathway, pigE is involved in the dehydration of the C-11 alcohol followed by the reduction of the C6(7) double bond which increases the electrophilicity of the C-5 ketone of the resulting acyl benzopyran and allows the intramolecular Knoevenagel aldol condensation with the C-20 enol of the side chain to yield the characteristic linear tricyclic carbon skeletons of the yellow pigments. The first step of the pathway is performed by the nrPKS pigA that forms the hexaketide precursor from successive condensations of five malonyl-CoA units, with a simple acetyl-CoA starter unit. The role of esterase pigG is not clear, but it may play at most a supplementary role in the formation of the benzaldehyde produced by the pigA nrPKS. This very reactive benzaldehyde is intercepted by the pigC ketoreductase that to provide the first stable enzyme-free MonAzPs intermediate, 6-(4-hydroxy-2-oxopentyl)-3-methyl-2,4-dioxocyclohexane carbaldehyde, also known as M7PKS-1. The FAD-dependent monooxygenase pigN hydroxylates M7PKS-1 at C-4, which triggers the formation of the pyran ring. PigJ, pigK and pigD are involved in the acetylation of the pyran ring. PigJ and pigK form the two subunits of a dedicated fungal FAS that produces the side chain fatty acyl moiety of MonAzPs and pigD transfers the fatty acyl chain to the C-4 alcohol. PigM and pigO are involved in the elimination of the omega-1 alcohol. PigM acts as an O-acetyltransferase that synthesizes the putative O-11 acetyl intermediate whereas pigO eliminates acetic acid to yield an intermediate with a C10(11) double bond. The dehydration of the C-11 alcohol followed by the reduction of the C6(7) double bond by the NAD(P)H-dependent oxidoreductase pigE increases the electrophilicity of the C-5 ketone of the resulting acyl benzopyran. This in turn sets up the C-5 ketone for an intramolecular Knoevenagel aldol condensation with the C-20 enol of the side chain. This condensation affords the characteristic linear tricyclic carbon skeletons of the yellow pigments that serve as the common precursors for the classical yellow pigments monascin and ankaflavin, orange pigments rubopunctatin and monascorubrin, and red pigments ribropunctamine and monascorubramine. The FAD-dependent oxidoreductase pigF is especially invoved in the biosynthesis of orange and red pigments via desaturation of C6(7). This is Aldo-keto reductase pigE from Monascus ruber (Mold).